We begin with the raw amino-acid sequence, 255 residues long: Probable iron chelatin transport ATP-binding protein jhp_0821 (255 aa).

The ABC transporter domain maps to 3–240 (LEVKNLSFKY…HNLSALYDTP (238 aa)). 35–42 (APNGSGKT) is an ATP binding site.

The protein belongs to the ABC transporter superfamily.

The protein resides in the cell inner membrane. Part of a binding-protein-dependent transport system for an iron chelatin. Probably responsible for energy coupling to the transport system (Potential). This is Probable iron chelatin transport ATP-binding protein jhp_0821 from Helicobacter pylori (strain J99 / ATCC 700824) (Campylobacter pylori J99).